Here is a 175-residue protein sequence, read N- to C-terminus: uncharacterized protein (175 aa).

One can recognise a Macro domain in the interval 1-173 (MYKNIIKLIS…VYKEKYKKLL (173 aa)).

Belongs to the MacroD-type family.

This is an uncharacterized protein from Fusobacterium nucleatum subsp. nucleatum (strain ATCC 25586 / DSM 15643 / BCRC 10681 / CIP 101130 / JCM 8532 / KCTC 2640 / LMG 13131 / VPI 4355).